The primary structure comprises 398 residues: MSASQIPNLNTLRRGGGRGRLRGRGGFETGAPSEDRHGSRGLAAQDRVVQGTDNDASVSRLSAVEIGYLEDPFAKVLTPPGSGTRRLPIINRGTYVRTTAIDRLVARFLEGPSQTKKQIISLGAGSDTRVFRLLSSRSSASSSDLIYHEIDFSANTAAKIKFIRAAPLLQRTLGLGSAQNVAIPDSGDALHSPTYHLHPVDLRTLAASGSATTSRSPSSPNPAEKDQPPCPLQGVDPTLPTLLISECCLVYLSPREAADVVDYFTKTLFPASVPLGLIIYEPIRPDDAFGRTMVANLATRGIQLQTLHEYASLEAQRRRLREHGLHSGQAAADIDFIWERWVSEAEKERVARLEMLDEVEEWQLLARHYCVAWGWTSGAGEDTTVFDGWKEIDGQTGD.

The segment covering 1 to 11 (MSASQIPNLNT) has biased composition (polar residues). Residues 1 to 54 (MSASQIPNLNTLRRGGGRGRLRGRGGFETGAPSEDRHGSRGLAAQDRVVQGTDN) are disordered. S-adenosyl-L-methionine contacts are provided by residues Arg97, Gly123, Asp151, and 201–202 (DL). Residues 208-218 (SGSATTSRSPS) are compositionally biased toward low complexity. The disordered stretch occupies residues 208-232 (SGSATTSRSPSSPNPAEKDQPPCPL). An S-adenosyl-L-methionine-binding site is contributed by Glu246.

It belongs to the methyltransferase superfamily. LCMT family.

It catalyses the reaction [phosphatase 2A protein]-C-terminal L-leucine + S-adenosyl-L-methionine = [phosphatase 2A protein]-C-terminal L-leucine methyl ester + S-adenosyl-L-homocysteine. Functionally, methylates the carboxyl group of the C-terminal leucine residue of protein phosphatase 2A catalytic subunits to form alpha-leucine ester residues. In Aspergillus fumigatus (strain ATCC MYA-4609 / CBS 101355 / FGSC A1100 / Af293) (Neosartorya fumigata), this protein is Leucine carboxyl methyltransferase 1 (ppm1).